The chain runs to 74 residues: Toxin Td6 (74 aa).

Positions I1–E8 are cleaved as a signal peptide. The 63-residue stretch at K9–G71 folds into the LCN-type CS-alpha/beta domain. 4 cysteine pairs are disulfide-bonded: C19/C70, C23/C45, C31/C51, and C35/C53. R72 carries the post-translational modification Arginine amide.

It belongs to the long (4 C-C) scorpion toxin superfamily. Sodium channel inhibitor family. Beta subfamily. As to expression, expressed by the venom gland.

Its subcellular location is the secreted. In terms of biological role, beta toxins bind voltage-independently at site-4 of sodium channels (Nav) and shift the voltage of activation toward more negative potentials thereby affecting sodium channel activation and promoting spontaneous and repetitive firing. This Tityus discrepans (Venezuelan scorpion) protein is Toxin Td6.